The following is a 479-amino-acid chain: 3-isopropylmalate dehydratase large subunit (479 aa).

3 residues coordinate [4Fe-4S] cluster: Cys353, Cys414, and Cys417.

This sequence belongs to the aconitase/IPM isomerase family. LeuC type 1 subfamily. As to quaternary structure, heterodimer of LeuC and LeuD. [4Fe-4S] cluster serves as cofactor.

It catalyses the reaction (2R,3S)-3-isopropylmalate = (2S)-2-isopropylmalate. The protein operates within amino-acid biosynthesis; L-leucine biosynthesis; L-leucine from 3-methyl-2-oxobutanoate: step 2/4. Its function is as follows. Catalyzes the isomerization between 2-isopropylmalate and 3-isopropylmalate, via the formation of 2-isopropylmaleate. In Xanthomonas campestris pv. campestris (strain 8004), this protein is 3-isopropylmalate dehydratase large subunit.